Here is a 181-residue protein sequence, read N- to C-terminus: Oligoribonuclease (181 aa).

An Exonuclease domain is found at 8–171 (LIWIDLEMTG…DDIRESVGEL (164 aa)). Residue Tyr-129 is part of the active site.

The protein belongs to the oligoribonuclease family.

Its subcellular location is the cytoplasm. 3'-to-5' exoribonuclease specific for small oligoribonucleotides. This chain is Oligoribonuclease, found in Serratia proteamaculans (strain 568).